Consider the following 305-residue polypeptide: MIKSWTKKWFLILFLMASCFGHLVATTGEKYFKMANQALKRGDYHRAVAFYKRSCNLRMGVGCTSLGSMYEYGDGVDQNISKAVFYYRRGCNLRNHLACASLGSMYEDGDGVQKDFPKAIYYYRRGCHLKGGVSCGSLGFMYFNGTGVKQNYAKALSFSKYACSLNYGISCNFVGYMYKSAKGVEKDLKKALANFKRGCHLKDGASCVSLGYLYEAGMDVKQNEEQALNLYKKGCSLKEGSGCHNVAVMYYTGKGAPKDLEKATSYYKKGCALGFSGSCKVLEVIGKESDNLQDDAQNDTQDSVQ.

An N-terminal signal peptide occupies residues 1-27; that stretch reads MIKSWTKKWFLILFLMASCFGHLVATT. 4 TPR repeats span residues 28-61, 96-133, 168-205, and 240-277; these read GEKYFKMANQALKRGDYHRAVAFYKRSCNLRMGV, HLACASLGSMYEDGDGVQKDFPKAIYYYRRGCHLKGGV, GISCNFVGYMYKSAKGVEKDLKKALANFKRGCHLKDGA, and GSGCHNVAVMYYTGKGAPKDLEKATSYYKKGCALGFSG. 7 disulfide bridges follow: cysteine 55/cysteine 63, cysteine 91/cysteine 99, cysteine 127/cysteine 135, cysteine 163/cysteine 171, cysteine 199/cysteine 207, cysteine 235/cysteine 243, and cysteine 271/cysteine 279.

This sequence belongs to the hcp beta-lactamase family.

Its subcellular location is the secreted. The catalysed reaction is a beta-lactam + H2O = a substituted beta-amino acid. May hydrolyze 6-aminopenicillinic acid and 7-aminocephalosporanic acid (ACA) derivatives. Binds to penicillin. This chain is Putative beta-lactamase HcpD (hcpD), found in Helicobacter pylori (strain J99 / ATCC 700824) (Campylobacter pylori J99).